Consider the following 228-residue polypeptide: MEGRLFTFLGAIGGHGQEWIILSHYVLVIGIIFIIARAATRKLQLVPTGSQNVLEAFVGGIISMGADTMGEKNARTYMPLIGSLALVIFVSNMIGVIPGFEAPTSNINFTLSLALIVFVYYNYLGIKKNGFVAYFKHFMGPMPVLAPLMFPIEIISHLSRIVSLSFRLFGSIRGDDMFLMVLLMLVPWILPLPGFFLLTAFGVLQAFIFSILTYVYIAGSIMMEHEEH.

7 consecutive transmembrane segments (helical) span residues glycine 16–alanine 36, leucine 45–glycine 65, leucine 80–phenylalanine 100, asparagine 106–isoleucine 126, phenylalanine 138–leucine 158, phenylalanine 178–leucine 198, and phenylalanine 201–isoleucine 221.

Belongs to the ATPase A chain family. As to quaternary structure, F-type ATPases have 2 components, CF(1) - the catalytic core - and CF(0) - the membrane proton channel. CF(1) has five subunits: alpha(3), beta(3), gamma(1), delta(1), epsilon(1). CF(0) has three main subunits: a(1), b(2) and c(9-12). The alpha and beta chains form an alternating ring which encloses part of the gamma chain. CF(1) is attached to CF(0) by a central stalk formed by the gamma and epsilon chains, while a peripheral stalk is formed by the delta and b chains.

It is found in the cell inner membrane. Key component of the proton channel; it plays a direct role in the translocation of protons across the membrane. The polypeptide is ATP synthase subunit a (Aliarcobacter butzleri (strain RM4018) (Arcobacter butzleri)).